The primary structure comprises 34 residues: Jingzhaotoxin F7-10.36 (34 aa).

3 disulfides stabilise this stretch: cysteine 2–cysteine 17, cysteine 9–cysteine 22, and cysteine 16–cysteine 29.

It belongs to the neurotoxin 10 (Hwtx-1) family. 50 (Jztz-F7) subfamily. Expressed by the venom gland.

The protein localises to the secreted. Probable ion channel inhibitor. The polypeptide is Jingzhaotoxin F7-10.36 (Chilobrachys guangxiensis (Chinese earth tiger tarantula)).